The chain runs to 107 residues: Sperm protamine P1 (107 aa).

Basic and acidic residues-rich tracts occupy residues 1–10 (ALRKVDRNRF) and 20–33 (REAK…EFPG). A propeptide spans 1-35 (ALRKVDRNRFVLDNVTPQPREAKRYKEEEEFPGHG) (removed in mature form). The segment at 1–107 (ALRKVDRNRF…RRRRRGKKGK (107 aa)) is disordered. Residues 34-107 (HGRRRRRRSK…RRRRRGKKGK (74 aa)) show a composition bias toward basic residues. S42 bears the Phosphoserine mark.

In terms of processing, a series of N-terminal cleavages yield the mature protein. Post-translationally, only the mature protein is phosphorylated. As to expression, gonads.

The protein localises to the nucleus. It localises to the chromosome. Its function is as follows. Protamines substitute for histones in the chromatin of sperm during the haploid phase of spermatogenesis. They compact sperm DNA into a highly condensed, stable and inactive complex. The chain is Sperm protamine P1 from Bolinus brandaris (Purple dye murex).